Reading from the N-terminus, the 452-residue chain is Putrescine hydroxycinnamoyltransferase (452 aa).

The Proton acceptor role is filled by histidine 151. Residues 213–234 form a disordered region; the sequence is PAAGVDGDVGGDHKQQHGHGGE. The segment covering 222-234 has biased composition (basic and acidic residues); sequence GGDHKQQHGHGGE. Aspartate 398 (proton acceptor) is an active-site residue.

Belongs to the plant acyltransferase family. As to expression, highly expressed in roots. Expressed at low levels in flowers.

Its function is as follows. Hydroxycinnamoyl transferase that catalyzes the transfer of an acyl from p-coumaryol-CoA to putrescine, to produce coumaroyl putrescine. Can use feruloyl-CoA, caffeoyl-CoA and sinapoyl-CoA as acyl donors. Seems to be able to transfer the acyl group from feruloyl-CoA to the acyl acceptors agmatine and spermidine. The protein is Putrescine hydroxycinnamoyltransferase of Oryza sativa subsp. japonica (Rice).